The chain runs to 288 residues: Elongation factor Ts (288 aa).

The interval 80-83 (TDFL) is involved in Mg(2+) ion dislocation from EF-Tu.

This sequence belongs to the EF-Ts family.

It is found in the cytoplasm. Its function is as follows. Associates with the EF-Tu.GDP complex and induces the exchange of GDP to GTP. It remains bound to the aminoacyl-tRNA.EF-Tu.GTP complex up to the GTP hydrolysis stage on the ribosome. The chain is Elongation factor Ts from Pseudomonas fluorescens (strain ATCC BAA-477 / NRRL B-23932 / Pf-5).